The following is a 64-amino-acid chain: Endodeoxyribonuclease toxin RalR (64 aa).

Ca(2+) serves as cofactor. Mg(2+) is required as a cofactor.

With respect to regulation, inhibited by EDTA. In terms of biological role, toxic component of a type I toxin-antitoxin (TA) system. Upon overexpression inhibits growth and reduces colony-forming units in both the presence and absence of the Rac prophage, cells become filamentous. Has deoxyribonuclease activity (probably endonucleolytic), does not digest RNA. Its toxic effects are neutralized by sRNA antitoxin RalA, which is encoded in trans on the opposite DNA strand. Has RAL-like activity. The sequence is that of Endodeoxyribonuclease toxin RalR (ralR) from Escherichia coli (strain K12).